Here is a 377-residue protein sequence, read N- to C-terminus: Carbamoyl phosphate synthase small chain (377 aa).

The tract at residues 1 to 186 (MSTPALLVLA…LGKGFVTPDE (186 aa)) is CPSase. Ser47, Gly238, and Gly240 together coordinate L-glutamine. The Glutamine amidotransferase type-1 domain occupies 190 to 377 (HVVAYDFGVK…IGNMKAAKRA (188 aa)). Cys266 (nucleophile) is an active-site residue. L-glutamine contacts are provided by Leu267, Gln270, Asn308, Gly310, and Phe311. Active-site residues include His350 and Glu352.

Belongs to the CarA family. As to quaternary structure, composed of two chains; the small (or glutamine) chain promotes the hydrolysis of glutamine to ammonia, which is used by the large (or ammonia) chain to synthesize carbamoyl phosphate. Tetramer of heterodimers (alpha,beta)4.

The enzyme catalyses hydrogencarbonate + L-glutamine + 2 ATP + H2O = carbamoyl phosphate + L-glutamate + 2 ADP + phosphate + 2 H(+). The catalysed reaction is L-glutamine + H2O = L-glutamate + NH4(+). The protein operates within amino-acid biosynthesis; L-arginine biosynthesis; carbamoyl phosphate from bicarbonate: step 1/1. It functions in the pathway pyrimidine metabolism; UMP biosynthesis via de novo pathway; (S)-dihydroorotate from bicarbonate: step 1/3. Its function is as follows. Small subunit of the glutamine-dependent carbamoyl phosphate synthetase (CPSase). CPSase catalyzes the formation of carbamoyl phosphate from the ammonia moiety of glutamine, carbonate, and phosphate donated by ATP, constituting the first step of 2 biosynthetic pathways, one leading to arginine and/or urea and the other to pyrimidine nucleotides. The small subunit (glutamine amidotransferase) binds and cleaves glutamine to supply the large subunit with the substrate ammonia. The protein is Carbamoyl phosphate synthase small chain of Neisseria meningitidis serogroup A / serotype 4A (strain DSM 15465 / Z2491).